A 339-amino-acid chain; its full sequence is Sphingomyelinase D (339 aa).

Positions 1 to 21 (MVSLLRLCSFLLAAGSILVQG) are cleaved as a signal peptide. Residue H60 is part of the active site. 3 residues coordinate Mg(2+): E80, D82, and D128. The SMD-tail signature appears at 309–316 (ATVDDNPW). The tract at residues 313 to 339 (DNPWSSMSKKGSSKSSWVKGEVPSIAH) is disordered. Low complexity predominate over residues 317–328 (SSMSKKGSSKSS).

Belongs to the sphingomyelinase D/phospholipase D family. The cofactor is Mg(2+).

The protein resides in the secreted. It catalyses the reaction a sphingomyelin + H2O = an N-acylsphing-4-enine 1-phosphate + choline + H(+). Its function is as follows. Catalyzes the hydrolysis of sphingomyelin. Sphingomyelinases D are produced by some spider in their venoms, but also by arthropods such as ticks, or pathogenic bacteria and fungi. They might play a role in pathogenicity through different mechanisms, such as membrane destabilization and host cell penetration, but also pulmonary inflammation and cutaneous lesions. In Arthroderma benhamiae (strain ATCC MYA-4681 / CBS 112371) (Trichophyton mentagrophytes), this protein is Sphingomyelinase D.